A 609-amino-acid chain; its full sequence is UvrABC system protein C (609 aa).

The GIY-YIG domain occupies 16–94 (HLPGVYRHLD…IKSLRPRYNI (79 aa)). A UVR domain is found at 203 to 238 (REVMDEIEARMLQASTELRFEEAAVLRDQMGSLSKV).

The protein belongs to the UvrC family. In terms of assembly, interacts with UvrB in an incision complex.

The protein localises to the cytoplasm. The UvrABC repair system catalyzes the recognition and processing of DNA lesions. UvrC both incises the 5' and 3' sides of the lesion. The N-terminal half is responsible for the 3' incision and the C-terminal half is responsible for the 5' incision. This Bordetella bronchiseptica (strain ATCC BAA-588 / NCTC 13252 / RB50) (Alcaligenes bronchisepticus) protein is UvrABC system protein C.